Consider the following 485-residue polypeptide: GTPase Der (485 aa).

2 consecutive EngA-type G domains span residues 3 to 167 and 176 to 349; these read PTIA…PEPE and PVFA…NAAM. GTP is bound by residues 9–16, 56–60, 119–122, 182–189, 229–233, and 294–297; these read GRPNVGKS, DTGGF, NKGE, DTAGV, and NKWD. The KH-like domain maps to 350–434; that stretch reads IKMPTPKITR…PLRIQYNVSE (85 aa). The disordered stretch occupies residues 435–485; sequence NPYENADDKPKKKPLRRVSLSNRIEKREGRKEEKNRFKKKTKVSVKKQFSK. The segment covering 457 to 469 has biased composition (basic and acidic residues); sequence RIEKREGRKEEKN. Residues 470 to 485 show a composition bias toward basic residues; it reads RFKKKTKVSVKKQFSK.

It belongs to the TRAFAC class TrmE-Era-EngA-EngB-Septin-like GTPase superfamily. EngA (Der) GTPase family. In terms of assembly, associates with the 50S ribosomal subunit.

Its function is as follows. GTPase that plays an essential role in the late steps of ribosome biogenesis. The polypeptide is GTPase Der (Neisseria meningitidis serogroup A / serotype 4A (strain DSM 15465 / Z2491)).